We begin with the raw amino-acid sequence, 251 residues long: CDP-diacylglycerol pyrophosphatase (251 aa).

Residues 4–24 traverse the membrane as a helical segment; the sequence is AGLLFLVMIVIAVVAAGIGYW.

The protein belongs to the Cdh family.

Its subcellular location is the cell inner membrane. The catalysed reaction is a CDP-1,2-diacyl-sn-glycerol + H2O = a 1,2-diacyl-sn-glycero-3-phosphate + CMP + 2 H(+). The protein operates within phospholipid metabolism; CDP-diacylglycerol degradation; phosphatidate from CDP-diacylglycerol: step 1/1. In Escherichia coli O81 (strain ED1a), this protein is CDP-diacylglycerol pyrophosphatase.